The following is a 558-amino-acid chain: MSKENVVADSWDDADADPVKELMDKVEKVKLLQRKEEKKEAFFEKVKAEESSGVVSKLQTEEGLGPSAEEPKRVFLRRPKDGFAASENVIEASPPTSADTEEQPVTNVRSRSHHKLNQKEKQPAPTYEERQAAYQAARNRILGTEYKPDNQEIKEIKFIDRSKSPETLKMTQQNMVEHYGEELSRELMEQPAEIVPPERQYTPDFTQPPPSVSESGGVYNGPPGFQQKQPNFQPTLQQQSLHQQQYLDNQYMMQMNVQIPIQYHNQTQHQFVPHEASAISTTSQNSNGDGQNDQAIYYYQAPTQQPMNYIPYNLPNMAYPPPNFQPQGQLHHQMNAGQLHQIQQQQQQCQQIQHQPPQQHQQVINGQVMNQQNQRNQVNSYPQQNGAGRGQNRQPMMYQMPCNSGPTAKPPPLMNQMQNRCMTNNGQNYQNRNMQQQGQQRSYSSQPQNGQFYQNGNSNQNNPNNGRKQQHQPQQQQNKSGKFGQNRNDMQKNNYQPNLQQPPMSQNPIPFGCPPRNVNAIREQHANNGSPNTGAGILGPHPMMSASQWPALQQNRPQ.

In terms of domain architecture, SUZ spans 45–146 (KVKAEESSGV…ARNRILGTEY (102 aa)). Disordered stretches follow at residues 50 to 132 (ESSG…ERQA), 205 to 241 (FTQP…QQSL), and 374 to 558 (QRNQ…NRPQ). The span at 69-81 (EEPKRVFLRRPKD) shows a compositional bias: basic and acidic residues. Over residues 94-109 (PPTSADTEEQPVTNVR) the composition is skewed to polar residues. The span at 117–131 (NQKEKQPAPTYEERQ) shows a compositional bias: basic and acidic residues. Composition is skewed to low complexity over residues 374–394 (QRNQ…QNRQ) and 424–477 (NNGQ…QQQQ). 2 stretches are compositionally biased toward polar residues: residues 478 to 508 (NKSG…SQNP) and 545 to 558 (SASQ…NRPQ).

Interacts (via C-terminus) with atx-2 (via C-terminus); the interaction is RNA independent. Interacts with let-92. Phosphorylated. May be dephosphorylated by let-92.

The protein resides in the cytoplasm. It is found in the cytoskeleton. The protein localises to the microtubule organizing center. It localises to the centrosome. Its subcellular location is the centriole. The protein resides in the nucleus. It is found in the nucleolus. The protein localises to the chromosome. Functionally, RNA binding protein that is required for normal cell division and cytokinesis during embryonic development. Functions with RNA-binding protein atx-2 to ensure embryonic cell division, and to this end, plays a role in the regulation of centrosome assembly, position and size, and in astral microtubule outgrowth and nucleation. Furthermore, negatively regulates the levels of the protein kinase zyg-1 at the centrosome. Also involved in ensuring centrosome attachment to the nuclear envelope. In Caenorhabditis elegans, this protein is Suppressor of zyg-1 protein 20.